Consider the following 196-residue polypeptide: UPF0056 membrane protein BUsg_434 (196 aa).

The next 6 helical transmembrane spans lie at T8 to L28, I45 to L65, T71 to S91, F105 to L125, M134 to L154, and M174 to F194.

It belongs to the UPF0056 (MarC) family.

Its subcellular location is the cell membrane. The chain is UPF0056 membrane protein BUsg_434 from Buchnera aphidicola subsp. Schizaphis graminum (strain Sg).